Consider the following 908-residue polypeptide: Serine/threonine-protein kinase minibrain (908 aa).

Disordered regions lie at residues 1-46 (MYRL…QRHA) and 119-143 (KKRR…LYND). The Bipartite nuclear localization signal signature appears at 121-139 (RRAQQTQGDDDSSNKKERK). Residues 132 to 141 (SSNKKERKLY) are compositionally biased toward basic and acidic residues. Residues 164-484 (YEIDSLIGKG…PYYALQHNFF (321 aa)) form the Protein kinase domain. Residues 170–178 (IGKGSFGQV), lysine 193, and 243–246 (FELL) contribute to the ATP site. Aspartate 292 (proton acceptor) is an active-site residue. Disordered stretches follow at residues 552–592 (AAGS…AGPG), 623–669 (NAHP…RHSR), and 863–895 (PAAQ…SSPM). Gly residues predominate over residues 556 to 566 (SGSGSSVGGGS). Residues 567–576 (SAAQQQQAMP) are compositionally biased toward low complexity. Residues 577–589 (LPLPLPLPLPPLA) show a composition bias toward pro residues. Residues 623–654 (NAHPPPSLANSHHSTNSLGSLNHISPGSTGCH) are compositionally biased toward polar residues. Composition is skewed to low complexity over residues 655–664 (NNNSNSSNNN) and 868–893 (GISQ…SSSS).

Belongs to the protein kinase superfamily. CMGC Ser/Thr protein kinase family. MNB/DYRK subfamily. As to expression, in ventral nerve cord and supraesophageal ganglion of embryos. Is most prominent in the mushroom body neuropil and the outer proliferation center of the optic lobes in third instar larvae.

The protein resides in the nucleus. It catalyses the reaction L-seryl-[protein] + ATP = O-phospho-L-seryl-[protein] + ADP + H(+). It carries out the reaction L-threonyl-[protein] + ATP = O-phospho-L-threonyl-[protein] + ADP + H(+). The catalysed reaction is L-tyrosyl-[protein] + ATP = O-phospho-L-tyrosyl-[protein] + ADP + H(+). In terms of biological role, role in the specific control of proper proliferation of optic lobe neuronal progeny. This is Serine/threonine-protein kinase minibrain (mnb) from Drosophila melanogaster (Fruit fly).